A 267-amino-acid chain; its full sequence is Hydroxyacylglutathione hydrolase (267 aa).

The Zn(2+) site is built by H55, H57, D59, H60, H121, D138, and H176.

The protein belongs to the metallo-beta-lactamase superfamily. Glyoxalase II family. Monomer. Zn(2+) serves as cofactor.

It carries out the reaction an S-(2-hydroxyacyl)glutathione + H2O = a 2-hydroxy carboxylate + glutathione + H(+). Its pathway is secondary metabolite metabolism; methylglyoxal degradation; (R)-lactate from methylglyoxal: step 2/2. Thiolesterase that catalyzes the hydrolysis of S-D-lactoyl-glutathione to form glutathione and D-lactic acid. The chain is Hydroxyacylglutathione hydrolase from Shewanella sp. (strain ANA-3).